The primary structure comprises 571 residues: Tail sheath protein (571 aa).

This sequence belongs to the myoviridae tail sheath protein family. As to quaternary structure, homomultimer.

The protein localises to the virion. Its subcellular location is the host cytoplasm. Its function is as follows. Polymerizes as an extended structure around the baseplate-tail tube complex. During ejection, the sheath shifts to a contracted form, thereby making the inner tail tube protrude through the host cell envelope. The sequence is that of Tail sheath protein from Bacillus subtilis (Bacteriophage SP01).